We begin with the raw amino-acid sequence, 232 residues long: 5'-methylthioadenosine/S-adenosylhomocysteine nucleosidase (232 aa).

The Proton acceptor role is filled by E12. Residues G78, I152, and 173 to 174 each bind substrate; that span reads ME. D197 acts as the Proton donor in catalysis.

This sequence belongs to the PNP/UDP phosphorylase family. MtnN subfamily. As to quaternary structure, homodimer.

The enzyme catalyses S-adenosyl-L-homocysteine + H2O = S-(5-deoxy-D-ribos-5-yl)-L-homocysteine + adenine. It carries out the reaction S-methyl-5'-thioadenosine + H2O = 5-(methylsulfanyl)-D-ribose + adenine. It catalyses the reaction 5'-deoxyadenosine + H2O = 5-deoxy-D-ribose + adenine. It participates in amino-acid biosynthesis; L-methionine biosynthesis via salvage pathway; S-methyl-5-thio-alpha-D-ribose 1-phosphate from S-methyl-5'-thioadenosine (hydrolase route): step 1/2. Functionally, catalyzes the irreversible cleavage of the glycosidic bond in both 5'-methylthioadenosine (MTA) and S-adenosylhomocysteine (SAH/AdoHcy) to adenine and the corresponding thioribose, 5'-methylthioribose and S-ribosylhomocysteine, respectively. Also cleaves 5'-deoxyadenosine, a toxic by-product of radical S-adenosylmethionine (SAM) enzymes, into 5-deoxyribose and adenine. Thus, is required for in vivo function of the radical SAM enzymes biotin synthase and lipoic acid synthase, that are inhibited by 5'-deoxyadenosine accumulation. The protein is 5'-methylthioadenosine/S-adenosylhomocysteine nucleosidase of Escherichia coli O7:K1 (strain IAI39 / ExPEC).